The sequence spans 980 residues: Chitin binding domain containing chtb-2 (980 aa).

The N-terminal stretch at 1 to 20 (MRTMHCFLFILLFCLGQVFT) is a signal peptide. 2 N-linked (GlcNAc...) asparagine glycosylation sites follow: Asn187 and Asn190. 3 disordered regions span residues 310 to 354 (ERQQ…AELD), 431 to 451 (QEEE…QIRQ), and 486 to 512 (EILR…QQEA). Asn941 and Asn975 each carry an N-linked (GlcNAc...) asparagine glycan.

In Caenorhabditis elegans, this protein is Chitin binding domain containing chtb-2.